Consider the following 385-residue polypeptide: Cytochrome b (385 aa).

The next 4 membrane-spanning stretches (helical) occupy residues 34 to 54 (FGSILGLCLFLQIATGLILTM), 78 to 99 (WFIRNFHITGASLFFSCMFIHI), 114 to 134 (WYSGVILFICAMVTAFFGYVL), and 179 to 199 (FLVLHFLVPFLMIAVSLTHLL). 2 residues coordinate heme b: H84 and H98. Heme b contacts are provided by H183 and H197. A ubiquinone is bound at residue H202. The next 4 helical transmembrane spans lie at 227 to 247 (FKDILGFLITLSLIFLGSTLF), 289 to 309 (LMGVFALIMSLSVLLFMPFLI), 321 to 341 (FMQFTFWLMISNFILLSWLGA), and 348 to 368 (YTIMSQVTSFLYFFIFLFLFP).

Belongs to the cytochrome b family. In terms of assembly, the cytochrome bc1 complex contains 3 respiratory subunits (MT-CYB, CYC1 and UQCRFS1), 2 core proteins (UQCRC1 and UQCRC2) and probably 6 low-molecular weight proteins. Heme b is required as a cofactor.

The protein localises to the mitochondrion inner membrane. Its function is as follows. Component of the ubiquinol-cytochrome c reductase complex (complex III or cytochrome b-c1 complex) that is part of the mitochondrial respiratory chain. The b-c1 complex mediates electron transfer from ubiquinol to cytochrome c. Contributes to the generation of a proton gradient across the mitochondrial membrane that is then used for ATP synthesis. The sequence is that of Cytochrome b (MT-CYB) from Myxine glutinosa (Atlantic hagfish).